The primary structure comprises 431 residues: Glutamate--tRNA ligase 1 (431 aa).

Residues 6–16 (PSPTGDMHIGN) carry the 'HIGH' region motif. The 'KMSKS' region motif lies at 235-239 (KMSKR). K238 contacts ATP.

It belongs to the class-I aminoacyl-tRNA synthetase family. Glutamate--tRNA ligase type 1 subfamily. As to quaternary structure, monomer.

It is found in the cytoplasm. It carries out the reaction tRNA(Glu) + L-glutamate + ATP = L-glutamyl-tRNA(Glu) + AMP + diphosphate. Functionally, catalyzes the attachment of glutamate to tRNA(Glu) in a two-step reaction: glutamate is first activated by ATP to form Glu-AMP and then transferred to the acceptor end of tRNA(Glu). This is Glutamate--tRNA ligase 1 from Campylobacter jejuni subsp. jejuni serotype O:23/36 (strain 81-176).